The sequence spans 493 residues: Rho guanine nucleotide exchange factor 9 (493 aa).

The 60-residue stretch at 15–74 (DSIVSAEAVWDHVTMANRGVAFKAGDVIKVLDASNKDWWWGQIDDEEGWFPASFVRLWVN) folds into the SH3 domain. An interaction with GPHN region spans residues 107 to 117 (RDQMRANVINE). The 185-residue stretch at 110 to 294 (MRANVINEIM…RNVTQQINER (185 aa)) folds into the DH domain. One can recognise a PH domain in the interval 325–432 (ELIYTGEMAW…WLRAFREERK (108 aa)). The interval 453–473 (AMTVRKASKQKGRVGEEENQS) is disordered.

In terms of assembly, interacts with GPHN. As to expression, detected in brain, throughout the gray matter. Detected at low levels in heart and skeletal muscle.

The protein localises to the cytoplasm. It localises to the postsynaptic density. In terms of biological role, acts as a guanine nucleotide exchange factor (GEF) for CDC42. Promotes formation of GPHN clusters. This Rattus norvegicus (Rat) protein is Rho guanine nucleotide exchange factor 9 (Arhgef9).